Reading from the N-terminus, the 505-residue chain is Cobyric acid synthase (505 aa).

The GATase cobBQ-type domain occupies Asp251–Phe444. Cys332 serves as the catalytic Nucleophile. Residue His436 is part of the active site.

This sequence belongs to the CobB/CobQ family. CobQ subfamily.

It functions in the pathway cofactor biosynthesis; adenosylcobalamin biosynthesis. Its function is as follows. Catalyzes amidations at positions B, D, E, and G on adenosylcobyrinic A,C-diamide. NH(2) groups are provided by glutamine, and one molecule of ATP is hydrogenolyzed for each amidation. This Clostridium novyi (strain NT) protein is Cobyric acid synthase.